Consider the following 144-residue polypeptide: 3-hydroxyacyl-[acyl-carrier-protein] dehydratase FabZ (144 aa).

Histidine 51 is an active-site residue.

Belongs to the thioester dehydratase family. FabZ subfamily.

It is found in the cytoplasm. It carries out the reaction a (3R)-hydroxyacyl-[ACP] = a (2E)-enoyl-[ACP] + H2O. In terms of biological role, involved in unsaturated fatty acids biosynthesis. Catalyzes the dehydration of short chain beta-hydroxyacyl-ACPs and long chain saturated and unsaturated beta-hydroxyacyl-ACPs. This Lactococcus lactis subsp. cremoris (strain MG1363) protein is 3-hydroxyacyl-[acyl-carrier-protein] dehydratase FabZ.